Reading from the N-terminus, the 306-residue chain is Putative transcriptional regulator (306 aa).

Residues M1–T61 enclose the HTH lysR-type domain. Positions F21 to S40 form a DNA-binding region, H-T-H motif.

It belongs to the LysR transcriptional regulatory family.

May have a role in the regulation of oprD expression. The sequence is that of Putative transcriptional regulator from Pseudomonas aeruginosa (strain ATCC 15692 / DSM 22644 / CIP 104116 / JCM 14847 / LMG 12228 / 1C / PRS 101 / PAO1).